The primary structure comprises 536 residues: Signal peptide peptidase-like 5 (536 aa).

An N-terminal signal peptide occupies residues 1 to 29; that stretch reads MSLPPFTCRLLAAAAALYLIGLLCVGADT. At 30-186 the chain is on the lumenal side; sequence KDVTAPKIPG…VELLLYAPKS (157 aa). One can recognise a PA domain in the interval 94-170; the sequence is SNLTSKLSWS…TSSGDALKKS (77 aa). N-linked (GlcNAc...) asparagine glycosylation is found at Asn-95 and Asn-151. The chain crosses the membrane as a helical span at residues 187–207; the sequence is PIVDYAVVFLWLMSVGTVFVA. The Cytoplasmic portion of the chain corresponds to 208–243; sequence SVWSHVTSPKKNDEQYDELSPKKSSNVDATKGGAEE. The tract at residues 218–238 is disordered; that stretch reads KNDEQYDELSPKKSSNVDATK. A helical membrane pass occupies residues 244 to 264; that stretch reads ETLDISAMGAVIFVISASTFL. Over 265 to 273 the chain is Lumenal; the sequence is VLLFFFMSS. The helical transmembrane segment at 274 to 296 threads the bilayer; sequence WFILILTIFFVIGGMQGMHNINV. Residues 297–318 lie on the Cytoplasmic side of the membrane; sequence TLITRRCSKCGQKNLKLPLLGN. A helical transmembrane segment spans residues 319–339; it reads TSILSLVVLLFCFVVAILWFM. Over 340-344 the chain is Lumenal; it reads NRKTS. A helical transmembrane segment spans residues 345 to 365; sequence HAWAGQDIFGICMMINVLQVA. The Cytoplasmic portion of the chain corresponds to 366 to 374; that stretch reads RLPNIRVAT. The helical transmembrane segment at 375–395 threads the bilayer; it reads ILLCCAFFYDIFWVFISPLIF. Asp-384 is an active-site residue. Residues 396–428 lie on the Lumenal side of the membrane; it reads KQSVMIAVARGSKDTGESIPMLLRIPRLSDPWG. The chain crosses the membrane as a helical span at residues 429-449; sequence GYNMIGFGDILFPGLLICFIF. The active site involves Asp-437. The Cytoplasmic portion of the chain corresponds to 450–463; sequence RFDKENNKGVSNGY. A helical transmembrane segment spans residues 464 to 484; it reads FPWLMFGYGLGLFLTYLGLYV. The Lumenal portion of the chain corresponds to 485–489; the sequence is MNGHG. The helical transmembrane segment at 490-510 threads the bilayer; that stretch reads QPALLYLVPCTLGITVILGLV. The short motif at 491 to 493 is the PAL element; the sequence is PAL. Topologically, residues 511 to 536 are cytoplasmic; that stretch reads RKELRDLWNYGTQQPSAADVNPSPEA.

The protein belongs to the peptidase A22B family. Post-translationally, glycosylated.

The protein localises to the endosome membrane. Functionally, intramembrane-cleaving aspartic protease (I-CLiP) that cleaves type II membrane signal peptides in the hydrophobic plane of the membrane. This chain is Signal peptide peptidase-like 5 (SPPL5), found in Arabidopsis thaliana (Mouse-ear cress).